The sequence spans 27 residues: L-amino-acid oxidase (27 aa).

Homodimer; non-covalently linked. FAD is required as a cofactor. Post-translationally, contains 2 disulfide bonds. In terms of processing, N-glycosylated. As to expression, expressed by the venom gland.

The protein resides in the secreted. It carries out the reaction an L-alpha-amino acid + O2 + H2O = a 2-oxocarboxylate + H2O2 + NH4(+). It catalyses the reaction L-leucine + O2 + H2O = 4-methyl-2-oxopentanoate + H2O2 + NH4(+). In terms of biological role, catalyzes an oxidative deamination of predominantly hydrophobic and aromatic L-amino acids, thus producing hydrogen peroxide that may contribute to the diverse toxic effects of this enzyme. Shows activity on L-Leu. Exhibits diverse biological activities, such as hemolysis, edema, apoptosis, as well as induction of platelet aggregation. Effects of snake L-amino oxidases on platelets are controversial, since they either induce aggregation or inhibit agonist-induced aggregation. These different effects are probably due to different experimental conditions. Unlike other snake venom L-amino acid oxidases, does not induce hemorrhage. This protein may also have antibacterial and antiparasitic activities. The chain is L-amino-acid oxidase from Eristicophis macmahoni (Leaf-nosed viper).